A 317-amino-acid polypeptide reads, in one-letter code: Beta-ketoacyl-[acyl-carrier-protein] synthase III (317 aa).

Active-site residues include Cys112 and His244. Residues 245–249 (QANLR) are ACP-binding. Asn274 is a catalytic residue.

The protein belongs to the thiolase-like superfamily. FabH family. As to quaternary structure, homodimer.

Its subcellular location is the cytoplasm. It carries out the reaction malonyl-[ACP] + acetyl-CoA + H(+) = 3-oxobutanoyl-[ACP] + CO2 + CoA. The protein operates within lipid metabolism; fatty acid biosynthesis. Catalyzes the condensation reaction of fatty acid synthesis by the addition to an acyl acceptor of two carbons from malonyl-ACP. Catalyzes the first condensation reaction which initiates fatty acid synthesis and may therefore play a role in governing the total rate of fatty acid production. Possesses both acetoacetyl-ACP synthase and acetyl transacylase activities. Its substrate specificity determines the biosynthesis of branched-chain and/or straight-chain of fatty acids. This is Beta-ketoacyl-[acyl-carrier-protein] synthase III from Serratia proteamaculans (strain 568).